Reading from the N-terminus, the 74-residue chain is Kappa-scoloptoxin(07)-Ssm2f (74 aa).

Residues 1 to 19 (MLVFYAILFVTVFSNTVMG) form the signal peptide. The propeptide occupies 20–41 (ATIDKPIPKPIFREAIEEMEVN).

Belongs to the scoloptoxin-07 family. Post-translationally, contains 3 disulfide bonds. As to expression, expressed by the venom gland.

Its subcellular location is the secreted. Its function is as follows. Inhibits voltage-gated potassium channels. In Scolopendra mutilans (Chinese red-headed centipede), this protein is Kappa-scoloptoxin(07)-Ssm2f.